The primary structure comprises 544 residues: Spore germination protein KA (544 aa).

Residues 1–36 (MPLFSKRKNNTDSKDKQNTDERNQEQQQEKERPVLI) are disordered. Residues 9–33 (NNTDSKDKQNTDERNQEQQQEKERP) show a composition bias toward basic and acidic residues. 5 consecutive transmembrane segments (helical) span residues 279–299 (FAII…FVQF), 321–341 (VLVF…TTFH), 392–412 (AVSI…GIVS), 416–436 (VIIV…AMAI), and 443–463 (FIFI…GIIM). The span at 504–523 (KRPESVSKEDKVRQGKDQRP) shows a compositional bias: basic and acidic residues. The interval 504–544 (KRPESVSKEDKVRQGKDQRPEPAASRGMVNKDLEEGDQNGT) is disordered.

Belongs to the GerABKA family.

Its subcellular location is the cell membrane. Involved in the germination response to the combination of glucose, fructose, L-asparagine, and KCl. In Bacillus subtilis (strain 168), this protein is Spore germination protein KA (gerKA).